The primary structure comprises 161 residues: Tropomyosin (161 aa).

The stretch at 1–161 forms a coiled coil; the sequence is MDKLREKINA…DEVHQALEDL (161 aa). The span at 40–52 shows a compositional bias: basic and acidic residues; sequence EQEYESLSRKSEA. 2 disordered regions span residues 40 to 65 and 107 to 134; these read EQEYESLSRKSEAAESQLEELEEETK and EKMRQTDVKAEHFERRVQSLERERDDME.

In terms of assembly, homodimer.

Its subcellular location is the cytoplasm. It localises to the cytoskeleton. In terms of biological role, forms part of the F-actin contractile ring during cytokinesis. This Schizosaccharomyces pombe (strain 972 / ATCC 24843) (Fission yeast) protein is Tropomyosin (cdc8).